The sequence spans 218 residues: Small ribosomal subunit protein uS3c (218 aa).

Residues 47-118 (VQKHMRVSSG…RLNIAITRVA (72 aa)) form the KH type-2 domain.

The protein belongs to the universal ribosomal protein uS3 family. In terms of assembly, part of the 30S ribosomal subunit.

It is found in the plastid. The protein localises to the chloroplast. In Illicium oligandrum (Star anise), this protein is Small ribosomal subunit protein uS3c (rps3).